A 306-amino-acid chain; its full sequence is Methionyl-tRNA formyltransferase (306 aa).

Position 109-112 (109-112) interacts with (6S)-5,6,7,8-tetrahydrofolate; that stretch reads SILP.

It belongs to the Fmt family.

It carries out the reaction L-methionyl-tRNA(fMet) + (6R)-10-formyltetrahydrofolate = N-formyl-L-methionyl-tRNA(fMet) + (6S)-5,6,7,8-tetrahydrofolate + H(+). Attaches a formyl group to the free amino group of methionyl-tRNA(fMet). The formyl group appears to play a dual role in the initiator identity of N-formylmethionyl-tRNA by promoting its recognition by IF2 and preventing the misappropriation of this tRNA by the elongation apparatus. The polypeptide is Methionyl-tRNA formyltransferase (Sphingopyxis alaskensis (strain DSM 13593 / LMG 18877 / RB2256) (Sphingomonas alaskensis)).